The sequence spans 476 residues: Glutamate--tRNA ligase (476 aa).

The short motif at 9–19 is the 'HIGH' region element; the sequence is PSPTGLFHIGT. The 'KMSKS' region motif lies at 248-252; that stretch reads KLSKR. K251 serves as a coordination point for ATP.

It belongs to the class-I aminoacyl-tRNA synthetase family. Glutamate--tRNA ligase type 1 subfamily. As to quaternary structure, monomer.

The protein resides in the cytoplasm. The catalysed reaction is tRNA(Glu) + L-glutamate + ATP = L-glutamyl-tRNA(Glu) + AMP + diphosphate. In terms of biological role, catalyzes the attachment of glutamate to tRNA(Glu) in a two-step reaction: glutamate is first activated by ATP to form Glu-AMP and then transferred to the acceptor end of tRNA(Glu). The polypeptide is Glutamate--tRNA ligase (Prochlorococcus marinus (strain AS9601)).